Reading from the N-terminus, the 248-residue chain is Thioredoxin-like protein AAED1, chloroplastic (248 aa).

The transit peptide at 1–52 (MAIALSSSSTITSITLQPKLKTIHGLGTVLPGYSVKSHFRSVSLRRSAVVVS) directs the protein to the chloroplast. Ala53 carries the post-translational modification N-acetylalanine.

This sequence belongs to the peroxiredoxin-like PRXL2 family. PRXL2C subfamily.

The protein localises to the plastid. The protein resides in the chloroplast. In Arabidopsis thaliana (Mouse-ear cress), this protein is Thioredoxin-like protein AAED1, chloroplastic.